The sequence spans 314 residues: tRNA dimethylallyltransferase (314 aa).

Residue 9–16 participates in ATP binding; sequence GPTAVGKT. Position 11–16 (11–16) interacts with substrate; that stretch reads TAVGKT. The interval 34–37 is interaction with substrate tRNA; sequence DSMQ.

The protein belongs to the IPP transferase family. As to quaternary structure, monomer. The cofactor is Mg(2+).

The catalysed reaction is adenosine(37) in tRNA + dimethylallyl diphosphate = N(6)-dimethylallyladenosine(37) in tRNA + diphosphate. Its function is as follows. Catalyzes the transfer of a dimethylallyl group onto the adenine at position 37 in tRNAs that read codons beginning with uridine, leading to the formation of N6-(dimethylallyl)adenosine (i(6)A). The sequence is that of tRNA dimethylallyltransferase from Clostridium tetani (strain Massachusetts / E88).